Consider the following 528-residue polypeptide: MADQNFLNEVSDRRTFAIISHPDAGKTTITEKLLLLGQLIQTAGSVKGRKGDKHATSDWMAMEKQRGISITSSVMQFPYKDRIVNLLDTPGHEDFSEDTYRTLTAVDSVLMIIDGAKGVEDRTIKLMDVCRLRDTPILTFINKMDRDIRDPIELLDEVEEVLKIAAAPITWPIGMSDFFKGVYNLYTDTIHVFVRGRGHTLMDDIRIEGLQSNEAKELLGDDWESYVDEIELVRGASHEFDHDAYLRGELTPVFFGTALSNFGVREMLDGFVEWAPAPIDRETNSRKVEAKEEKFSGFIFKIQANMDPKHRDRIAFMRVCSGTYSRGMKMRHCRIGKDIKVTDAVSFTAGDREGVEEAFSGDIIGLHNHGTIQIGDTFTEGEDLKFTGIPHFAPELFRRVRLKDPMKMKALQKGLQQLSEEGSTQLFMPQRNNELIVGAVGQLQYEVVAYRLKDEYKVECIYEAVNVNSARWVECDDAKKFEEFKNKCRDNLAIDGGGHLTYLAPTRVNLMMAEEKWPQVRFHSTREH.

Residues 11-279 (SDRRTFAIIS…GFVEWAPAPI (269 aa)) enclose the tr-type G domain. GTP-binding positions include 20–27 (SHPDAGKT), 88–92 (DTPGH), and 142–145 (NKMD).

It belongs to the TRAFAC class translation factor GTPase superfamily. Classic translation factor GTPase family. PrfC subfamily.

The protein resides in the cytoplasm. Functionally, increases the formation of ribosomal termination complexes and stimulates activities of RF-1 and RF-2. It binds guanine nucleotides and has strong preference for UGA stop codons. It may interact directly with the ribosome. The stimulation of RF-1 and RF-2 is significantly reduced by GTP and GDP, but not by GMP. The polypeptide is Peptide chain release factor 3 (Marinomonas sp. (strain MWYL1)).